Consider the following 61-residue polypeptide: uncharacterized protein (61 aa).

2 helical membrane-spanning segments follow: residues 4-24 (IIAFIWTFLLSHMACYLVASM) and 34-54 (SSVIAVVLYVLIMVLAEIMPM).

Its subcellular location is the cell membrane. This is an uncharacterized protein from Bacillus subtilis (strain 168).